The sequence spans 866 residues: Transcription factor E2F8 (866 aa).

Phosphoserine occurs at positions 71 and 102. 2 DNA-binding regions span residues 113–182 (RKEK…TWHG) and 261–347 (RKDK…KWTG). 3 disordered regions span residues 409–429 (RKINSAPSSPIKTHKAESTQN), 532–632 (TITP…STTL), and 794–837 (TNGQ…GSPC). 2 positions are modified to phosphoserine: serine 413 and serine 417. Positions 543-552 (VCPTTSSNAM) are enriched in polar residues. Basic and acidic residues-rich tracts occupy residues 588–603 (QGAKNREREPAREKGS) and 612–624 (SGSKKKFKEDQKA). Residues 794-805 (TNGQSFAGTGAQ) show a composition bias toward polar residues. Residues 825–834 (TPGGPTKPTG) are compositionally biased toward low complexity.

Belongs to the E2F/DP family. In terms of assembly, homodimer and heterodimer: mainly forms homodimers and, to a lesser extent, heterodimers with E2F8. Dimerization is important for DNA-binding. Interacts with HIF1A.

It is found in the nucleus. In terms of biological role, atypical E2F transcription factor that participates in various processes such as angiogenesis and polyploidization of specialized cells. Mainly acts as a transcription repressor that binds DNA independently of DP proteins and specifically recognizes the E2 recognition site 5'-TTTC[CG]CGC-3'. Directly represses transcription of classical E2F transcription factors such as E2F1: component of a feedback loop in S phase by repressing the expression of E2F1, thereby preventing p53/TP53-dependent apoptosis. Plays a key role in polyploidization of cells in placenta and liver by regulating the endocycle, probably by repressing genes promoting cytokinesis and antagonizing action of classical E2F proteins (E2F1, E2F2 and/or E2F3). Required for placental development by promoting polyploidization of trophoblast giant cells. Acts as a promoter of sprouting angiogenesis, possibly by acting as a transcription activator: associates with HIF1A, recognizes and binds the VEGFA promoter, which is different from canonical E2 recognition site, and activates expression of the VEGFA gene. This is Transcription factor E2F8 (E2F8) from Bos taurus (Bovine).